We begin with the raw amino-acid sequence, 889 residues long: Putative receptor-like protein kinase At3g46340 (889 aa).

A signal peptide spans 1–25 (MEFPHSVLLVVLIIATFAISNLVQA). At 26-514 (EEDQEGFISL…VITKKKFPVM (489 aa)) the chain is on the extracellular side. N-linked (GlcNAc...) asparagine glycans are attached at residues Asn185, Asn239, Asn259, Asn292, Asn316, Asn342, Asn366, Asn419, Asn435, Asn448, Asn467, and Asn474. LRR repeat units follow at residues 414-437 (RITS…QNLT), 438-460 (HLDK…LASM), and 462-483 (SLSF…ALLK). A helical membrane pass occupies residues 515–535 (IVALVSSAVVVILVVLVLIFV). Over 536 to 889 (FKKKKPSNLE…FDTKAVPSAR (354 aa)) the chain is Cytoplasmic. The interval 544-566 (LEDLPPSSNTPRENITSTSISDT) is disordered. A Protein kinase domain is found at 585-874 (KNLQRPLGEG…TQGMDSHSSF (290 aa)). ATP-binding positions include 591–599 (LGEGGFGVV) and Lys614. Tyr659 carries the post-translational modification Phosphotyrosine. Asp711 acts as the Proton acceptor in catalysis. Phosphoserine is present on Ser745. Residues Thr746 and Thr751 each carry the phosphothreonine modification. At Tyr759 the chain carries Phosphotyrosine. Residues 863-889 (NKTQGMDSHSSFEQSMSFDTKAVPSAR) form a disordered region. The segment covering 864–880 (KTQGMDSHSSFEQSMSF) has biased composition (polar residues).

Belongs to the protein kinase superfamily. Ser/Thr protein kinase family.

The protein resides in the cell membrane. The enzyme catalyses L-seryl-[protein] + ATP = O-phospho-L-seryl-[protein] + ADP + H(+). It carries out the reaction L-threonyl-[protein] + ATP = O-phospho-L-threonyl-[protein] + ADP + H(+). The chain is Putative receptor-like protein kinase At3g46340 from Arabidopsis thaliana (Mouse-ear cress).